A 669-amino-acid chain; its full sequence is Bestrophin-3 (669 aa).

Residues 1-31 (MTVTYSSKVANATFFGFHRLLLKWRGSIYKL) are Cytoplasmic-facing. A10 is a Ca(2+) binding site. A helical transmembrane segment spans residues 32-51 (LYREFIVFAVLYTAISLVYR). Over 52 to 60 (LLLTGAQKR) the chain is Extracellular. A helical transmembrane segment spans residues 61–82 (YFEKLSIYCDRYAEQIPVTFVL). The Cytoplasmic segment spans residues 83–237 (GFYVTLVVNR…DWVGIPLVYT (155 aa)). Residues 238–255 (QVVTLAVYTFFFACLIGR) form a helical membrane-spanning segment. Over 256-274 (QFLDPTKGYVGHDLDLYVP) the chain is Extracellular. The helical transmembrane segment at 275–288 (IFTLLQFFFYAGWL) threads the bilayer. Over 289-669 (KVAEQLINPF…GTPQRPRTWF (381 aa)) the chain is Cytoplasmic. Residues Q293, N296, D301, and D304 each coordinate Ca(2+). 4 disordered regions span residues 399–496 (LSTH…TKMP), 533–560 (QPSG…SAST), 591–627 (TSLG…GAGS), and 646–669 (ILEF…RTWF). Over residues 440–451 (NPHRGSPTRKQS) the composition is skewed to basic residues. Residues 475-492 (RTSTLQSLSPQSSVRSSP) show a composition bias toward low complexity. Residues 533–543 (QPSGTEQQVEP) show a composition bias toward polar residues. The segment covering 646 to 656 (ILEFNNEHTGE) has biased composition (basic and acidic residues).

This sequence belongs to the anion channel-forming bestrophin (TC 1.A.46) family. Calcium-sensitive chloride channel subfamily. In terms of tissue distribution, expressed in heart. Expressed in brain, retina/retinal pigment epithelium (RPE) and skeletal muscle. Expressed in acinar cells of parotid glands. Expressed in lung, kidney and testis.

Its subcellular location is the cell membrane. The enzyme catalyses chloride(in) = chloride(out). Ligand-gated anion channel that allows the movement of chloride monoatomic anions across cell membranes when activated by calcium (Ca2+). Functionally, does not function as calcium-gated chloride channel. The sequence is that of Bestrophin-3 (Best3) from Mus musculus (Mouse).